An 848-amino-acid polypeptide reads, in one-letter code: Nuclear cap-binding protein subunit 1 (848 aa).

In terms of domain architecture, MIF4G spans 8 to 228 (LLRIGEKGPE…DLLDRIQSLA (221 aa)). Positions 767-786 (EDDKPSAMDVDSENGNPKKS) are disordered.

The protein belongs to the NCBP1 family. Component of the nuclear cap-binding complex (CBC), a heterodimer composed of ABH1/CBP80 and CBP20 that interacts with m7GpppG-capped RNA. In terms of tissue distribution, expressed in all tissues analyzed, including roots, stems, leaves and flowers.

It localises to the nucleus. Its subcellular location is the cytoplasm. Component of the cap-binding complex (CBC), which binds cotranscriptionally to the 5'-cap of pre-mRNAs and is involved in various processes such as pre-mRNA splicing and RNA-mediated gene silencing (RNAi) by microRNAs (miRNAs). The CBC complex is involved in miRNA-mediated RNA interference and is required for primary miRNA processing. In the CBC complex, ABH1/CBP80 does not bind directly capped RNAs (m7GpppG-capped RNA) but is required to stabilize the movement of the N-terminal loop of CBP20 and lock the CBC into a high affinity cap-binding state with the cap structure. Involved in flowering regulation, possibly by regulating pre-mRNA splicing of FLC gene. Acts as a negative regulator of abscisic acid signaling in guard cells. The chain is Nuclear cap-binding protein subunit 1 (ABH1) from Arabidopsis thaliana (Mouse-ear cress).